A 354-amino-acid polypeptide reads, in one-letter code: MSKVKSITRESWILSTFPEWGSWLNEEIEQEQVAPGTFAMWWLGCTGIWLKSEGGTNVCVDFWCGTGKQSHGNPLMKQGHQMQRMAGVKKLQPNLRTTPFVLDPFAIRQIDAVLATHDHNDHIDVNVAAAVMQNCADDVPFIGPKTCVDLWIGWGVPKERCIVVKPGDVVKVKDIEIHALDAFDRTALITLPADQKAAGVLPDGMDDRAVNYLFKTPGGSLYHSGDSHYSNYYAKHGNEHQIDVALGSYGENPRGITDKMTSADMLRMGEALNAKVVIPFHHDIWSNFQADPQEIRVLWEMKKDRLKYGFKPFIWQVGGKFTWPLDKDNFEYHYPRGFDDCFTIEPDLPFKSFL.

This sequence belongs to the UlaG family. A divalent metal cation is required as a cofactor.

It is found in the cytoplasm. It carries out the reaction L-ascorbate 6-phosphate + H2O = 3-dehydro-L-gulonate 6-phosphate. It functions in the pathway cofactor degradation; L-ascorbate degradation; D-xylulose 5-phosphate from L-ascorbate: step 1/4. In terms of biological role, probably catalyzes the hydrolysis of L-ascorbate-6-P into 3-keto-L-gulonate-6-P. Is essential for L-ascorbate utilization under anaerobic conditions. In Escherichia coli O139:H28 (strain E24377A / ETEC), this protein is Probable L-ascorbate-6-phosphate lactonase UlaG.